We begin with the raw amino-acid sequence, 245 residues long: E3 ubiquitin-protein ligase RNF138 (245 aa).

The residue at position 2 (Ala2) is an N-acetylalanine. The RING-type zinc finger occupies 18-58 (CPVCQEVLKTPVRTAACQHVFCRKCFLTAMRESGIHCPLCR). The Zn(2+) site is built by Cys86, Cys89, His101, and Cys105. The C2HC RNF-type zinc finger occupies 86-105 (CRCCAKQIKFYRMRHHYKSC). The segment at 128-153 (VGNSNRSETSASDNIETYQENTGSSG) is disordered. 2 consecutive C2H2-type zinc fingers follow at residues 157 to 180 (FKCP…NSNH) and 187 to 215 (VTCP…NQRH). The UIM domain maps to 225-243 (LQLDEETQYQTAVEESFQV).

In terms of assembly, interacts with NLK. Interacts with XRCC5/Ku80. Interacts with RBBP8/CtIP. Post-translationally, auto-ubiquitinated.

Its subcellular location is the chromosome. The catalysed reaction is S-ubiquitinyl-[E2 ubiquitin-conjugating enzyme]-L-cysteine + [acceptor protein]-L-lysine = [E2 ubiquitin-conjugating enzyme]-L-cysteine + N(6)-ubiquitinyl-[acceptor protein]-L-lysine.. It functions in the pathway protein modification; protein ubiquitination. Its function is as follows. E3 ubiquitin-protein ligase involved in DNA damage response by promoting DNA resection and homologous recombination. Recruited to sites of double-strand breaks following DNA damage and specifically promotes double-strand break repair via homologous recombination. Two different, non-exclusive, mechanisms have been proposed. According to a report, regulates the choice of double-strand break repair by favoring homologous recombination over non-homologous end joining (NHEJ): acts by mediating ubiquitination of XRCC5/Ku80, leading to remove the Ku complex from DNA breaks, thereby promoting homologous recombination. According to another report, cooperates with UBE2Ds E2 ubiquitin ligases (UBE2D1, UBE2D2, UBE2D3 or UBE2D4) to promote homologous recombination by mediating ubiquitination of RBBP8/CtIP. Together with NLK, involved in the ubiquitination and degradation of TCF/LEF. Also exhibits auto-ubiquitination activity in combination with UBE2K. May act as a negative regulator in the Wnt/beta-catenin-mediated signaling pathway. This Bos taurus (Bovine) protein is E3 ubiquitin-protein ligase RNF138 (RNF138).